The sequence spans 206 residues: Probable glutathione S-transferase 9 (206 aa).

Positions 2–79 (VSYKLIYFQS…YLSKQFGISG (78 aa)) constitute a GST N-terminal domain. Glutathione-binding positions include tyrosine 8, tryptophan 39, lysine 43, 49-51 (GQV), and 63-64 (QS). The region spanning 81 to 206 (SSWEEAQVDA…WIEKRPVTSR (126 aa)) is the GST C-terminal domain.

This sequence belongs to the GST superfamily. Sigma family.

The enzyme catalyses RX + glutathione = an S-substituted glutathione + a halide anion + H(+). Its function is as follows. Conjugation of reduced glutathione to a wide number of exogenous and endogenous hydrophobic electrophiles. The sequence is that of Probable glutathione S-transferase 9 (gst-9) from Caenorhabditis elegans.